A 337-amino-acid polypeptide reads, in one-letter code: Anthranilate phosphoribosyltransferase (337 aa).

Residues glycine 81, glycine 84–aspartate 85, serine 89, asparagine 91–threonine 94, lysine 109–serine 117, and alanine 121 each bind 5-phospho-alpha-D-ribose 1-diphosphate. Glycine 81 provides a ligand contact to anthranilate. Mg(2+) is bound at residue serine 93. Anthranilate is bound at residue asparagine 112. Residue arginine 167 participates in anthranilate binding. Mg(2+)-binding residues include aspartate 226 and glutamate 227.

The protein belongs to the anthranilate phosphoribosyltransferase family. As to quaternary structure, homodimer. Mg(2+) serves as cofactor.

It catalyses the reaction N-(5-phospho-beta-D-ribosyl)anthranilate + diphosphate = 5-phospho-alpha-D-ribose 1-diphosphate + anthranilate. It functions in the pathway amino-acid biosynthesis; L-tryptophan biosynthesis; L-tryptophan from chorismate: step 2/5. Its function is as follows. Catalyzes the transfer of the phosphoribosyl group of 5-phosphorylribose-1-pyrophosphate (PRPP) to anthranilate to yield N-(5'-phosphoribosyl)-anthranilate (PRA). This Afipia carboxidovorans (strain ATCC 49405 / DSM 1227 / KCTC 32145 / OM5) (Oligotropha carboxidovorans) protein is Anthranilate phosphoribosyltransferase.